Consider the following 436-residue polypeptide: MDSVAFEDVAVNFTQEEWALLSPSQKNLYRDVTLETFRNLASVGIQWKDQDIENLYQNLGIKLRSLVERLCGRKEGNEHRETFSQIPDCHLNKKSQTGVKPCKCSVCGKVFLRHSFLDRHMRAHAGHKRSECGGEWRETPRKQKQHGKASISPSSGARRTVTPTRKRPYECKVCGKAFNSPNLFQIHQRTHTGKRSYKCREIVRAFTVSSFFRKHGKMHTGEKRYECKYCGKPIDYPSLFQIHVRTHTGEKPYKCKQCGKAFISAGYLRTHEIRSHALEKSHQCQECGKKLSCSSSLHRHERTHSGGKLYECQKCAKVFRCPTSLQAHERAHTGERPYECNKCGKTFNYPSCFRRHKKTHSGEKPYECTRCGKAFGWCSSLRRHEMTHTGEKPFDCKQCGKVFTFSNYLRLHERTHLAGRSQCFGRRQGDHLSPGV.

The 79-residue stretch at 4 to 82 folds into the KRAB domain; sequence VAFEDVAVNF…RKEGNEHRET (79 aa). The C2H2-type 1 zinc-finger motif lies at 102 to 124; the sequence is CKCSVCGKVFLRHSFLDRHMRAH. The segment covering 128 to 141 has biased composition (basic and acidic residues); the sequence is KRSECGGEWRETPR. A disordered region spans residues 128–164; sequence KRSECGGEWRETPRKQKQHGKASISPSSGARRTVTPT. The segment covering 151–163 has biased composition (polar residues); sequence ISPSSGARRTVTP. A C2H2-type 2 zinc finger spans residues 169–191; sequence YECKVCGKAFNSPNLFQIHQRTH. A C2H2-type 3; degenerate zinc finger spans residues 197 to 219; that stretch reads YKCREIVRAFTVSSFFRKHGKMH. 7 C2H2-type zinc fingers span residues 225 to 247, 253 to 276, 282 to 304, 310 to 332, 338 to 360, 366 to 388, and 394 to 416; these read YECK…VRTH, YKCK…IRSH, HQCQ…ERTH, YECQ…ERAH, YECN…KKTH, YECT…EMTH, and FDCK…ERTH.

The protein belongs to the krueppel C2H2-type zinc-finger protein family. As to expression, expressed in a variety of adult and fetal tissues.

It is found in the nucleus. May be involved in transcriptional regulation. The chain is Zinc finger protein 101 (ZNF101) from Homo sapiens (Human).